A 430-amino-acid polypeptide reads, in one-letter code: Histidine--tRNA ligase (430 aa).

This sequence belongs to the class-II aminoacyl-tRNA synthetase family. As to quaternary structure, homodimer.

It is found in the cytoplasm. It catalyses the reaction tRNA(His) + L-histidine + ATP = L-histidyl-tRNA(His) + AMP + diphosphate + H(+). The chain is Histidine--tRNA ligase (hisS) from Clostridium acetobutylicum (strain ATCC 824 / DSM 792 / JCM 1419 / IAM 19013 / LMG 5710 / NBRC 13948 / NRRL B-527 / VKM B-1787 / 2291 / W).